Consider the following 155-residue polypeptide: MSKRNQVSYVRPAEPAFLSRFKERVGYKEGPTVETKKIQPQLPDEDGNHSDKEDEQPQVVVLKKGDLTAEEVMKIKAEIKAAKTDEEPPPADGRIVYRKPVKRSSDEKCSGLTASSKKKKTNEDDVNKQSSVRKNSQKQIKNSSLLSFDSEDENE.

Disordered stretches follow at residues 24–63 and 80–155; these read RVGYKEGPTVETKKIQPQLPDEDGNHSDKEDEQPQVVVLK and KAAK…DENE. The residue at position 50 (Ser50) is a Phosphoserine. Residue Lys108 is modified to N6-acetyllysine. Residues 128–147 show a composition bias toward polar residues; it reads KQSSVRKNSQKQIKNSSLLS. 3 positions are modified to phosphoserine: Ser130, Ser147, and Ser150.

This is an uncharacterized protein from Mus musculus (Mouse).